The sequence spans 632 residues: tRNA uridine 5-carboxymethylaminomethyl modification enzyme MnmG (632 aa).

FAD contacts are provided by residues 15–20 (GAGHAG), Val-127, and Ser-182. Positions 203–226 (TPPRVKSSTIDYSKTEEQPGDDHP) are disordered. Residues 215–226 (SKTEEQPGDDHP) show a composition bias toward basic and acidic residues. An NAD(+)-binding site is contributed by 274-288 (GARYCPSIEDKIVRF). Residue Gln-371 participates in FAD binding.

It belongs to the MnmG family. In terms of assembly, homodimer. Heterotetramer of two MnmE and two MnmG subunits. Requires FAD as cofactor.

The protein resides in the cytoplasm. Its function is as follows. NAD-binding protein involved in the addition of a carboxymethylaminomethyl (cmnm) group at the wobble position (U34) of certain tRNAs, forming tRNA-cmnm(5)s(2)U34. This Listeria monocytogenes serotype 4b (strain F2365) protein is tRNA uridine 5-carboxymethylaminomethyl modification enzyme MnmG.